Consider the following 543-residue polypeptide: Probable E3 ubiquitin-protein ligase ARI9 (543 aa).

The tract at residues 1–26 is disordered; that stretch reads MDFSDDDMIDNKSGEENYSYGGGNES. The tract at residues 124 to 332 is TRIAD supradomain; sequence VNIQCGICFE…RHSGACNRFV (209 aa). Residues Cys128, Cys131, Cys145, His147, Cys150, Cys153, Cys173, Cys178, Cys217, Cys222, Cys240, Cys242, Cys247, Cys250, His255, Cys260, Cys287, and Cys290 each coordinate Zn(2+). The RING-type 1 zinc-finger motif lies at 128–178; sequence CGICFESYTREEIARVSCGHPYCKTCWAGYITTKIEDGPGCLRVKCPEPSC. Residues 197–260 form an IBR-type zinc finger; it reads EKYSRYILRS…SEDAHSPVDC (64 aa). An RING-type 2; atypical zinc finger spans residues 287–317; it reads CPECKRPIEKNDGCNHMTCSAPCGHEFCWIC. The active site involves Cys300. Zn(2+) contacts are provided by Cys305, Cys309, Cys314, Cys317, His324, and Cys328.

The protein belongs to the RBR family. Ariadne subfamily. Zn(2+) serves as cofactor.

It carries out the reaction [E2 ubiquitin-conjugating enzyme]-S-ubiquitinyl-L-cysteine + [acceptor protein]-L-lysine = [E2 ubiquitin-conjugating enzyme]-L-cysteine + [acceptor protein]-N(6)-ubiquitinyl-L-lysine.. It functions in the pathway protein modification; protein ubiquitination. In terms of biological role, might act as an E3 ubiquitin-protein ligase, or as part of E3 complex, which accepts ubiquitin from specific E2 ubiquitin-conjugating enzymes and then transfers it to substrates. This is Probable E3 ubiquitin-protein ligase ARI9 (ARI9) from Arabidopsis thaliana (Mouse-ear cress).